A 306-amino-acid polypeptide reads, in one-letter code: Methionyl-tRNA formyltransferase (306 aa).

Residue 110-113 (SLLP) participates in (6S)-5,6,7,8-tetrahydrofolate binding.

Belongs to the Fmt family.

The catalysed reaction is L-methionyl-tRNA(fMet) + (6R)-10-formyltetrahydrofolate = N-formyl-L-methionyl-tRNA(fMet) + (6S)-5,6,7,8-tetrahydrofolate + H(+). Attaches a formyl group to the free amino group of methionyl-tRNA(fMet). The formyl group appears to play a dual role in the initiator identity of N-formylmethionyl-tRNA by promoting its recognition by IF2 and preventing the misappropriation of this tRNA by the elongation apparatus. The protein is Methionyl-tRNA formyltransferase of Brucella suis biovar 1 (strain 1330).